Reading from the N-terminus, the 575-residue chain is uncharacterized protein (575 aa).

A signal peptide spans Met-1–Ala-28. One can recognise an SLH domain in the interval Ser-87–Ala-151. Residues Lys-158–Gln-196 adopt a coiled-coil conformation.

It belongs to the OprB family.

This is an uncharacterized protein from Nostoc sp. (strain PCC 7120 / SAG 25.82 / UTEX 2576).